The sequence spans 249 residues: ATP synthase subunit a 1 (249 aa).

6 helical membrane passes run 26–46 (FTNVSAFMVATVVVASGFLYL), 84–104 (FFPFVFSLFMFVLVANFLGLF), 114–134 (IIVTFALAVLVIGTVIVYGFF), 143–163 (LFVPSGVPGIIVPLVVAIEII), 193–213 (FVVSLAALGPIGIGGAVLPLI), and 216–236 (VAITALEFLVAFLQAYVFTVL).

It belongs to the ATPase A chain family. As to quaternary structure, F-type ATPases have 2 components, CF(1) - the catalytic core - and CF(0) - the membrane proton channel. CF(1) has five subunits: alpha(3), beta(3), gamma(1), delta(1), epsilon(1). CF(0) has three main subunits: a(1), b(2) and c(9-12). The alpha and beta chains form an alternating ring which encloses part of the gamma chain. CF(1) is attached to CF(0) by a central stalk formed by the gamma and epsilon chains, while a peripheral stalk is formed by the delta and b chains.

Its subcellular location is the cell inner membrane. Its function is as follows. Key component of the proton channel; it plays a direct role in the translocation of protons across the membrane. The chain is ATP synthase subunit a 1 from Brucella anthropi (strain ATCC 49188 / DSM 6882 / CCUG 24695 / JCM 21032 / LMG 3331 / NBRC 15819 / NCTC 12168 / Alc 37) (Ochrobactrum anthropi).